The primary structure comprises 304 residues: tRNA dimethylallyltransferase (304 aa).

An ATP-binding site is contributed by 10–17; the sequence is GPTASGKS. Position 12–17 (12–17) interacts with substrate; it reads TASGKS. The segment at 35–38 is interaction with substrate tRNA; the sequence is DSRQ.

Belongs to the IPP transferase family. Monomer. Mg(2+) is required as a cofactor.

The enzyme catalyses adenosine(37) in tRNA + dimethylallyl diphosphate = N(6)-dimethylallyladenosine(37) in tRNA + diphosphate. Its function is as follows. Catalyzes the transfer of a dimethylallyl group onto the adenine at position 37 in tRNAs that read codons beginning with uridine, leading to the formation of N6-(dimethylallyl)adenosine (i(6)A). The protein is tRNA dimethylallyltransferase of Gloeothece citriformis (strain PCC 7424) (Cyanothece sp. (strain PCC 7424)).